Here is a 117-residue protein sequence, read N- to C-terminus: NADH-ubiquinone oxidoreductase chain 3 (117 aa).

Transmembrane regions (helical) follow at residues 1 to 21 (MLML…VMML), 58 to 78 (FLIA…LPMI), and 86 to 106 (LMNW…GLYH).

It belongs to the complex I subunit 3 family.

The protein resides in the mitochondrion membrane. The enzyme catalyses a ubiquinone + NADH + 5 H(+)(in) = a ubiquinol + NAD(+) + 4 H(+)(out). Its function is as follows. Core subunit of the mitochondrial membrane respiratory chain NADH dehydrogenase (Complex I) that is believed to belong to the minimal assembly required for catalysis. Complex I functions in the transfer of electrons from NADH to the respiratory chain. The immediate electron acceptor for the enzyme is believed to be ubiquinone. The sequence is that of NADH-ubiquinone oxidoreductase chain 3 (mt:ND3) from Anopheles gambiae (African malaria mosquito).